The primary structure comprises 338 residues: 1-aminocyclopropane-1-carboxylate deaminase (338 aa).

The residue at position 51 (Lys51) is an N6-(pyridoxal phosphate)lysine. The active-site Nucleophile is the Ser78.

Belongs to the ACC deaminase/D-cysteine desulfhydrase family. In terms of assembly, homotrimer. Requires pyridoxal 5'-phosphate as cofactor.

The catalysed reaction is 1-aminocyclopropane-1-carboxylate + H2O = 2-oxobutanoate + NH4(+). Its function is as follows. Catalyzes a cyclopropane ring-opening reaction, the irreversible conversion of 1-aminocyclopropane-1-carboxylate (ACC) to ammonia and alpha-ketobutyrate. Allows growth on ACC as a nitrogen source. In Ralstonia nicotianae (strain ATCC BAA-1114 / GMI1000) (Ralstonia solanacearum), this protein is 1-aminocyclopropane-1-carboxylate deaminase.